Reading from the N-terminus, the 268-residue chain is Serine/arginine-rich splicing factor SR30 (268 aa).

RRM domains follow at residues 7–82 (RTIY…IAHG) and 109–187 (YRVL…EYES). The segment covering 186–199 (ESRSVSRSPDDSKS) has biased composition (basic and acidic residues). The disordered stretch occupies residues 186 to 268 (ESRSVSRSPD…NSPVSPVISG (83 aa)). 11 positions are modified to phosphoserine: Ser193, Ser210, Ser212, Ser214, Ser219, Ser221, Ser227, Ser236, Ser246, Ser256, and Ser260. Residues 207 to 247 (RGPSCSYSSKSRSVSPARSISPRSRPLSRSRSLYSSVSRSQ) show a composition bias toward low complexity. The segment covering 257-268 (RSNSPVSPVISG) has biased composition (low complexity).

It belongs to the splicing factor SR family. SR subfamily. In terms of assembly, component of the spliceosome. Interacts with SNRNP35, CYP59 and CYP63. In terms of processing, phosphorylated. As to expression, ubiquitous.

It is found in the nucleus speckle. It localises to the nucleus. The protein resides in the nucleoplasm. The protein localises to the cytoplasm. Regulatory splicing factor that modulates alternative splicing and gene expression in specific cell types. Autoregulates its own expression. Probably involved in intron recognition and spliceosome assembly. The polypeptide is Serine/arginine-rich splicing factor SR30 (SR30) (Arabidopsis thaliana (Mouse-ear cress)).